The following is a 464-amino-acid chain: MSALKIYNTLAREKQPFTPIEPGKVRMYVCGMTVYDYCHIGHARVMVVFDLVQRWLRASGYEVNYVRNITDIDDKIIKRAAENGESISALTQRFIDAMDEDAAALGVQKPDHEPRATNYVPQMLGLIEALERNGLAYKSSDGDVNYSVRDFPGYGKLSGKSLDDLRAGERVDVNTGKRDPLDFVLWKSSKEAEPDEVKWASKWGSGRPGWHIECSAMACELLGQQFDIHGGGADLQFPHHENEIAQSEGASQHTFVNYWMHNGFVRVDNEKMSKSLGNFFTIREVLAKYDSEVVRFFILRAHYRSQLNYSDAHLDDARNALTRMYTALKGVAPDQAALDMTEAHALRFAEAMNDDFNTPLAVAVLFELANEINKTKSPALARQLVGLAGIVGLLQRPAQQFLHAGLANGEDGEMETFVVEQIEARVNAKKAKNFAEADRIRAELLEKGIILEDKPGGLTEWRRA.

Cysteine 30 serves as a coordination point for Zn(2+). Residues 32–42 (MTVYDYCHIGH) carry the 'HIGH' region motif. The Zn(2+) site is built by cysteine 214, histidine 239, and glutamate 243. The 'KMSKS' region signature appears at 271–275 (KMSKS). Lysine 274 contacts ATP.

The protein belongs to the class-I aminoacyl-tRNA synthetase family. Monomer. Requires Zn(2+) as cofactor.

The protein resides in the cytoplasm. It carries out the reaction tRNA(Cys) + L-cysteine + ATP = L-cysteinyl-tRNA(Cys) + AMP + diphosphate. This is Cysteine--tRNA ligase from Janthinobacterium sp. (strain Marseille) (Minibacterium massiliensis).